A 154-amino-acid chain; its full sequence is Endoribonuclease YbeY (154 aa).

Zn(2+) is bound by residues His114, His118, and His124.

Belongs to the endoribonuclease YbeY family. Zn(2+) serves as cofactor.

The protein localises to the cytoplasm. Its function is as follows. Single strand-specific metallo-endoribonuclease involved in late-stage 70S ribosome quality control and in maturation of the 3' terminus of the 16S rRNA. This chain is Endoribonuclease YbeY, found in Anaplasma phagocytophilum (strain HZ).